A 68-amino-acid polypeptide reads, in one-letter code: Alpha-conotoxin-like Lp1.2 (68 aa).

Residues Met-1 to Ser-21 form the signal peptide. A propeptide spanning residues Phe-22–Arg-48 is cleaved from the precursor. Intrachain disulfides connect Cys-50/Cys-56 and Cys-51/Cys-64. Residues Ser-52–Pro-54 form a ser-Xaa-Pro motif, crucial for potent interaction with nAChR region. Cys-64 is subject to Cysteine amide. Residues Gly-65–Arg-68 constitute a propeptide that is removed on maturation.

This sequence belongs to the conotoxin A superfamily. As to expression, expressed by the venom duct.

It is found in the secreted. Its function is as follows. Alpha-conotoxins act on postsynaptic membranes, they bind to the nicotinic acetylcholine receptors (nAChR) and thus inhibit them. The sequence is that of Alpha-conotoxin-like Lp1.2 from Conus leopardus (Leopard cone).